We begin with the raw amino-acid sequence, 557 residues long: DNA ligase (557 aa).

Glu251 lines the ATP pocket. Residue Lys253 is the N6-AMP-lysine intermediate of the active site. 6 residues coordinate ATP: Arg258, Arg273, Glu303, Phe342, Arg418, and Lys424.

This sequence belongs to the ATP-dependent DNA ligase family. It depends on Mg(2+) as a cofactor.

It carries out the reaction ATP + (deoxyribonucleotide)n-3'-hydroxyl + 5'-phospho-(deoxyribonucleotide)m = (deoxyribonucleotide)n+m + AMP + diphosphate.. Functionally, DNA ligase that seals nicks in double-stranded DNA during DNA replication, DNA recombination and DNA repair. The protein is DNA ligase of Methanosphaera stadtmanae (strain ATCC 43021 / DSM 3091 / JCM 11832 / MCB-3).